Reading from the N-terminus, the 99-residue chain is UPF0473 protein LEUM_0559 (99 aa).

This sequence belongs to the UPF0473 family.

This Leuconostoc mesenteroides subsp. mesenteroides (strain ATCC 8293 / DSM 20343 / BCRC 11652 / CCM 1803 / JCM 6124 / NCDO 523 / NBRC 100496 / NCIMB 8023 / NCTC 12954 / NRRL B-1118 / 37Y) protein is UPF0473 protein LEUM_0559.